A 430-amino-acid chain; its full sequence is tRNA(Ile)-lysidine synthase (430 aa).

Position 27-32 (27-32 (SGGSDS)) interacts with ATP.

It belongs to the tRNA(Ile)-lysidine synthase family.

The protein localises to the cytoplasm. The catalysed reaction is cytidine(34) in tRNA(Ile2) + L-lysine + ATP = lysidine(34) in tRNA(Ile2) + AMP + diphosphate + H(+). Its function is as follows. Ligates lysine onto the cytidine present at position 34 of the AUA codon-specific tRNA(Ile) that contains the anticodon CAU, in an ATP-dependent manner. Cytidine is converted to lysidine, thus changing the amino acid specificity of the tRNA from methionine to isoleucine. The protein is tRNA(Ile)-lysidine synthase of Rickettsia bellii (strain RML369-C).